The chain runs to 590 residues: Phosphate-repressible phosphate permease pho-4 (590 aa).

The next 8 helical transmembrane spans lie at 6–26 (FDYLLAIGTIFAALDAWNIGA), 44–64 (YLQAMILGSIMEFAGSVGVGA), 85–105 (ALLMLGMVCAVVASSIYLTMA), 118–138 (IMGGVIGMGIAAVGADGVQWV), 149–169 (VFLAWVIAPGLAGAFASIIFL), 186–206 (FVMVPIYFGITAALLCMLLLW), 220–240 (IAGTIIGVGAAWALLVTIFLM), and 246–266 (IVILEDWQLRFWHIPLGPLLL). Topologically, residues 267–466 (RRGEVPPPPA…GALPEKGKAD (200 aa)) are cytoplasmic. Residues 297–361 (ARRAAQNGDS…PQIKTMVGPR (65 aa)) form a disordered region. Residues 313–322 (VTSSTSNPSA) show a composition bias toward polar residues. Positions 325 to 345 (DGEKGATITKDDSSYSHDHSE) are enriched in basic and acidic residues. Transmembrane regions (helical) follow at residues 467-487 (VPVWILVFGASCLVIGLWTYG), 506-525 (GFSMELGSAVTVILATRLKL), 527-547 (VSTTQCITGATVGVGLCSGTW), and 561-581 (GWFITLPVAGIISGCLMGIII).

This sequence belongs to the inorganic phosphate transporter (PiT) (TC 2.A.20) family.

It is found in the cell membrane. With respect to regulation, phosphate transport activity is competitively inhibited by vanadate and arsenate. High-affinity transporter for external inorganic phosphate. Acts probably as a sodium-phosphate symporter. Component of the high affinity phosphate transport system II (ptsII) necessary for scavenging phosphorus from the environment under conditions of limiting phosphorus. The sequence is that of Phosphate-repressible phosphate permease pho-4 from Neurospora crassa (strain ATCC 24698 / 74-OR23-1A / CBS 708.71 / DSM 1257 / FGSC 987).